The chain runs to 209 residues: C-type lectin domain family 6 member A (209 aa).

Residues Met1–Leu20 are Cytoplasmic-facing. Residues Trp21–Val41 traverse the membrane as a helical; Signal-anchor for type II membrane protein segment. The Extracellular portion of the chain corresponds to Thr42–Leu209. 4 disulfide bridges follow: Cys66-Cys78, Cys79-Cys90, Cys107-Cys202, and Cys176-Cys194. One can recognise a C-type lectin domain in the interval Phe86–Glu203. Val116, Asn118, and Glu122 together coordinate Ca(2+). The N-linked (GlcNAc...) asparagine glycan is linked to Asn131. Positions 168, 170, and 174 each coordinate Ca(2+). Alpha-D-mannopyranose contacts are provided by residues Glu168 to Asn170, Glu174, Trp182, Asn190 to Asp191, and Arg198. The N-linked (GlcNAc...) asparagine glycan is linked to Asn170. Residues Asn190 and Asp191 each contribute to the Ca(2+) site. Glu203 contacts Ca(2+).

In terms of assembly, associated with FCER1G. Heterodimer with CLEC4D; this heterodimer forms a pattern recognition receptor (PRR) against fungal infection. Expressed in lung, spleen, lymph node, leukocytes, bone marrow, tonsils and dendritic cells. Strongly expressed in purified monocytes and weakly in B-cells. In peripheral blood cells, preferentially expressed in plasmacytoids rather than myeloids.

The protein resides in the cell membrane. In terms of biological role, calcium-dependent lectin that acts as a pattern recognition receptor (PRR) of the innate immune system: specifically recognizes and binds alpha-mannans on C.albicans hypheas. Binding of C.albicans alpha-mannans to this receptor complex leads to phosphorylation of the immunoreceptor tyrosine-based activation motif (ITAM) of FCER1G, triggering activation of SYK, CARD9 and NF-kappa-B, consequently driving maturation of antigen-presenting cells and shaping antigen-specific priming of T-cells toward effector T-helper 1 and T-helper 17 cell subtypes. Recognizes also, in a mannose-dependent manner, allergens from house dust mite and fungi, by promoting cysteinyl leukotriene production. Recognizes soluble elements from the eggs of Shistosoma mansoni altering adaptive immune responses. This Homo sapiens (Human) protein is C-type lectin domain family 6 member A.